Reading from the N-terminus, the 294-residue chain is 4-hydroxy-tetrahydrodipicolinate synthase (294 aa).

Residue Thr-45 participates in pyruvate binding. Tyr-133 serves as the catalytic Proton donor/acceptor. The active-site Schiff-base intermediate with substrate is the Lys-161. Ile-203 contributes to the pyruvate binding site.

It belongs to the DapA family. In terms of assembly, homotetramer; dimer of dimers.

The protein resides in the cytoplasm. It carries out the reaction L-aspartate 4-semialdehyde + pyruvate = (2S,4S)-4-hydroxy-2,3,4,5-tetrahydrodipicolinate + H2O + H(+). It functions in the pathway amino-acid biosynthesis; L-lysine biosynthesis via DAP pathway; (S)-tetrahydrodipicolinate from L-aspartate: step 3/4. Catalyzes the condensation of (S)-aspartate-beta-semialdehyde [(S)-ASA] and pyruvate to 4-hydroxy-tetrahydrodipicolinate (HTPA). The sequence is that of 4-hydroxy-tetrahydrodipicolinate synthase from Buchnera aphidicola subsp. Schizaphis graminum (strain Sg).